The sequence spans 339 residues: Putative pectinesterase 10 (339 aa).

Positions 1-28 (MKGVTIHNFCYSYFKVCLLVMSLAYGSA) are cleaved as a signal peptide. A glycan (N-linked (GlcNAc...) asparagine) is linked at Asn112. Thr116 provides a ligand contact to substrate. Catalysis depends on Asp169, which acts as the Proton donor. Asp190 functions as the Nucleophile in the catalytic mechanism. Residues Arg252 and Trp254 each contribute to the substrate site. Asn322 carries an N-linked (GlcNAc...) asparagine glycan.

Belongs to the pectinesterase family. Expressed in siliques.

It localises to the secreted. Its subcellular location is the cell wall. The catalysed reaction is [(1-&gt;4)-alpha-D-galacturonosyl methyl ester](n) + n H2O = [(1-&gt;4)-alpha-D-galacturonosyl](n) + n methanol + n H(+). Its pathway is glycan metabolism; pectin degradation; 2-dehydro-3-deoxy-D-gluconate from pectin: step 1/5. Acts in the modification of cell walls via demethylesterification of cell wall pectin. This Arabidopsis thaliana (Mouse-ear cress) protein is Putative pectinesterase 10 (PME10).